A 63-amino-acid chain; its full sequence is Large ribosomal subunit protein uL29 (63 aa).

Belongs to the universal ribosomal protein uL29 family.

This chain is Large ribosomal subunit protein uL29, found in Aliivibrio fischeri (strain ATCC 700601 / ES114) (Vibrio fischeri).